Here is a 147-residue protein sequence, read N- to C-terminus: Large ribosomal subunit protein uL22c (147 aa).

Belongs to the universal ribosomal protein uL22 family. In terms of assembly, part of the 50S ribosomal subunit.

Its subcellular location is the plastid. The protein resides in the chloroplast. In terms of biological role, this protein binds specifically to 23S rRNA. Its function is as follows. The globular domain of the protein is located near the polypeptide exit tunnel on the outside of the subunit, while an extended beta-hairpin is found that lines the wall of the exit tunnel in the center of the 70S ribosome. In Lolium perenne (Perennial ryegrass), this protein is Large ribosomal subunit protein uL22c (rpl22).